The chain runs to 218 residues: MGVTVLQPYPLEKSGAQTIDFLLKRVVALGAVPAGQFLVDCETYSSNPQLGPPKTVHILHNSEQPASVFSILDTGTKQIPLVTDGLFDLLMTRIAPAYTSKKQTKIESKGQRFEFGDFVIKLGSVTMSQNFKGVLVEVEYRPCLVPGSCWELMREFLQGFLGSNVSNSMPAYFTQRSSINPNHSKANEIYQPIDTINQYLEHFTNYRKQTMAPVGVRP.

Belongs to the Mediator complex subunit 20 family. As to quaternary structure, component of the Mediator complex.

It localises to the nucleus. In terms of biological role, component of the Mediator complex, a coactivator involved in the regulated transcription of nearly all RNA polymerase II-dependent genes. Mediator functions as a bridge to convey information from gene-specific regulatory proteins to the basal RNA polymerase II transcription machinery. Mediator is recruited to promoters by direct interactions with regulatory proteins and serves as a scaffold for the assembly of a functional preinitiation complex with RNA polymerase II and the general transcription factors. The protein is Mediator of RNA polymerase II transcription subunit 20 (MED20) of Anopheles gambiae (African malaria mosquito).